The chain runs to 253 residues: Phosphate import ATP-binding protein PstB (253 aa).

Positions 7–248 (IKVRDLNLYY…PRDRRTEDYI (242 aa)) constitute an ABC transporter domain. Position 39–46 (39–46 (GPSGCGKS)) interacts with ATP.

Belongs to the ABC transporter superfamily. Phosphate importer (TC 3.A.1.7) family. As to quaternary structure, the complex is composed of two ATP-binding proteins (PstB), two transmembrane proteins (PstC and PstA) and a solute-binding protein (PstS).

It localises to the cell membrane. It catalyses the reaction phosphate(out) + ATP + H2O = ADP + 2 phosphate(in) + H(+). Its function is as follows. Part of the ABC transporter complex PstSACB involved in phosphate import. Responsible for energy coupling to the transport system. The protein is Phosphate import ATP-binding protein PstB of Carboxydothermus hydrogenoformans (strain ATCC BAA-161 / DSM 6008 / Z-2901).